We begin with the raw amino-acid sequence, 662 residues long: Glycogen debranching enzyme (662 aa).

D338 (nucleophile) is an active-site residue. E373 (proton donor) is an active-site residue.

The protein belongs to the glycosyl hydrolase 13 family.

The catalysed reaction is Hydrolysis of (1-&gt;6)-alpha-D-glucosidic linkages to branches with degrees of polymerization of three or four glucose residues in limit dextrin.. It participates in glycan degradation; glycogen degradation. Functionally, removes maltotriose and maltotetraose chains that are attached by 1,6-alpha-linkage to the limit dextrin main chain, generating a debranched limit dextrin. The protein is Glycogen debranching enzyme of Yersinia pestis.